A 432-amino-acid polypeptide reads, in one-letter code: Phosphomevalonate kinase (432 aa).

ATP is bound by residues Lys-10 and 142 to 148 (VEKTGLG).

The protein belongs to the GHMP kinase family. Mevalonate kinase subfamily.

It localises to the cytoplasm. The catalysed reaction is (R)-5-phosphomevalonate + ATP = (R)-5-diphosphomevalonate + ADP. The protein operates within isoprenoid biosynthesis; isopentenyl diphosphate biosynthesis via mevalonate pathway; isopentenyl diphosphate from (R)-mevalonate: step 2/3. Functionally, phosphomevalonate kinase; part of the second module of ergosterol biosynthesis pathway that includes the middle steps of the pathway. ERG8 converts 5-phosphomevalonate to 5-diphosphomevalonate. The second module is carried out in the vacuole and involves the formation of farnesyl diphosphate, which is also an important intermediate in the biosynthesis of ubiquinone, dolichol, heme and prenylated proteins. Activity by the mevalonate kinase ERG12 first converts mevalonate into 5-phosphomevalonate. 5-phosphomevalonate is then further converted to 5-diphosphomevalonate by the phosphomevalonate kinase ERG8. The diphosphomevalonate decarboxylase MVD then produces isopentenyl diphosphate. The isopentenyl-diphosphate delta-isomerase IDI1 then catalyzes the 1,3-allylic rearrangement of the homoallylic substrate isopentenyl (IPP) to its highly electrophilic allylic isomer, dimethylallyl diphosphate (DMAPP). Finally the farnesyl diphosphate synthase ERG20 catalyzes the sequential condensation of isopentenyl pyrophosphate with dimethylallyl pyrophosphate, and then with the resultant geranylpyrophosphate to the ultimate product farnesyl pyrophosphate. This chain is Phosphomevalonate kinase, found in Candida albicans (strain SC5314 / ATCC MYA-2876) (Yeast).